Reading from the N-terminus, the 373-residue chain is 4-hydroxy-3-methylbut-2-en-1-yl diphosphate synthase (flavodoxin) (373 aa).

[4Fe-4S] cluster is bound by residues C270, C273, C305, and E312.

This sequence belongs to the IspG family. [4Fe-4S] cluster is required as a cofactor.

The catalysed reaction is (2E)-4-hydroxy-3-methylbut-2-enyl diphosphate + oxidized [flavodoxin] + H2O + 2 H(+) = 2-C-methyl-D-erythritol 2,4-cyclic diphosphate + reduced [flavodoxin]. Its pathway is isoprenoid biosynthesis; isopentenyl diphosphate biosynthesis via DXP pathway; isopentenyl diphosphate from 1-deoxy-D-xylulose 5-phosphate: step 5/6. Functionally, converts 2C-methyl-D-erythritol 2,4-cyclodiphosphate (ME-2,4cPP) into 1-hydroxy-2-methyl-2-(E)-butenyl 4-diphosphate. This is 4-hydroxy-3-methylbut-2-en-1-yl diphosphate synthase (flavodoxin) from Photobacterium profundum (strain SS9).